The chain runs to 254 residues: SKA complex subunit 1 (254 aa).

The stretch at 49–90 (NELLNKLELEIQYQEQTNSSLKELFESLEEDYKDVEHLKENI) forms a coiled coil. The segment at 91-131 (PPHLPQVTVTQNFVNGSDLDPEEPVKVEEPAPTKKPPKEQR) is flexiple loop that anchors MAPRE1. The Slightly degenerated SXLP motif; may mediate interaction with MAPRE1, targeting to microtubule plus ends, stabilization on kinetochores and is required for proper chromosome alignment to the metaphase plate motif lies at 92-95 (PHLP). The tract at residues 105 to 131 (NGSDLDPEEPVKVEEPAPTKKPPKEQR) is disordered. The span at 113–131 (EPVKVEEPAPTKKPPKEQR) shows a compositional bias: basic and acidic residues. A binds microtubules and protein phosphatase PP1 subunit PPP1CA region spans residues 131 to 254 (RSIKEMPFIT…GKGLTRYVIT (124 aa)). Threonine 156 is modified (phosphothreonine). Residue serine 241 is modified to Phosphoserine.

The protein belongs to the SKA1 family. As to quaternary structure, component of the SKA complex, composed of SKA1, SKA2 and SKA3. The SKA complex is a homodimer organized around a central W-shaped coiled-coil structure, formed by the interacting domains of SKA1, SKA2, and SKA3, each end of the 'W' is extended further by the C-terminal microtubule-binding domains of SKA1 and SKA3; the complex forms extended structures on microtubules. Interacts (via SXLP motif) with MAPRE1 (via C-terminus); the interaction is direct and stabilizes the kinetochore-microtubule attachment of the SKA1 complex. Interacts (via C-terminus) with protein phosphatase PP1 subunit PPP1CA; the interaction is direct and required for recruitment of PPP1CA to the kinetochore. Interacts with the NDC80 complex; the interaction is required to establish kinetochore-microtubule end-on attachments.

The protein resides in the cytoplasm. It localises to the cytoskeleton. The protein localises to the spindle. It is found in the chromosome. Its subcellular location is the centromere. The protein resides in the kinetochore. It localises to the microtubule organizing center. The protein localises to the centrosome. Functionally, component of the SKA complex, a microtubule plus end-binding complex of the outer kinetochore that stabilizes spindle microtubule-kinetochore attachments, promotes alignment of chromosomes at the mitotic spindle equator (chromosome congression) and assists suppression of the spindle assembly checkpoint. Kinetochores, consisting of a centromere-associated inner segment and a microtubule-contacting outer segment, play a crucial role in chromosome segregation by mediating the physical connection between centromeric DNA and spindle microtubules. The outer kinetochore is made up of the ten-subunit KMN network complex, comprising the MIS12, NDC80 and KNL1 complexes, and auxiliary microtubule-associated components such as the SKA complex; together they connect the outer kinetochore with the inner kinetochore, bind microtubules, and mediate interactions with mitotic checkpoint proteins that delay anaphase until chromosomes are bioriented on the spindle. The SKA complex is loaded onto bioriented kinetochores and it facilitates chromosome congression by stabilizing microtubules together with MAPRE1, and end-on attachment of the NDC80 complex to depolymerizing spindle microtubules, thereby assisting the poleward-moving kinetochore in withstanding microtubule pulling forces. The complex associates with dynamic microtubule plus-ends and can track both depolymerizing and elongating microtubules. The complex recruits protein phosphatase 1 (PP1) to the kinetochore in prometaphase and metaphase, to oppose spindle assembly checkpoint signaling and promote the onset of anaphase. In the complex, it mediates interactions with microtubules. It also stimulates AURKB/Aurora B catalytic activity. During meiosis the SKA complex stabilizes the meiotic spindle and is required for its migration to the cortex. In Bos taurus (Bovine), this protein is SKA complex subunit 1 (SKA1).